Reading from the N-terminus, the 443-residue chain is Sperm-associated antigen 4 protein (443 aa).

Residues 1-36 (MRRSPRSGSAASSHNHTPNFYSENSNSSHSATSGDS) show a composition bias toward low complexity. The interval 1–107 (MRRSPRSGSA…VRGGASEPSG (107 aa)) is disordered. 2 consecutive transmembrane segments (helical) span residues 137–157 (FLSLLFQVLSMVLSLAVDGLV) and 168–188 (FLFTAVSLLSIFLAALWWGLL). A coiled-coil region spans residues 203 to 244 (TLSQYHHRVHSQGQQLQQLQAELNKLHKEVSSVRAAHSERVA). Positions 267–427 (GASIDLEKTS…YRVRAHGVRT (161 aa)) constitute an SUN domain.

In terms of assembly, self-associates. Interacts with ODF1. May associate with microtubules. Interacts with SUN3 and SYNE1; suggesting the formation of a spermatogenesis-specific LINC complex; a SUN domain-based heterotrimer of SPAG4 and SUN3 may associate with SYNE1. Interacts with SEPT12 and LMNB1; during spermatogenesis. In terms of tissue distribution, isoform 1 is testis specific and is exclusively expressed in spermatids.

The protein localises to the membrane. Its subcellular location is the cytoplasm. It localises to the cytoskeleton. The protein resides in the nucleus envelope. It is found in the nucleus inner membrane. The protein localises to the flagellum axoneme. Its function is as follows. Involved in spermatogenesis. Required for sperm head formation but not required to establish and maintain general polarity of the sperm head. Required for anchoring and organization of the manchette. Required for targeting of SUN3 and probably SYNE1 through a probable SUN1:SYNE3 LINC complex to the nuclear envelope and involved in accurate posterior sperm head localization of the complex. May anchor SUN3 the nuclear envelope. Involved in maintenance of the nuclear envelope integrity. May assist the organization and assembly of outer dense fibers (ODFs), a specific structure of the sperm tail. The polypeptide is Sperm-associated antigen 4 protein (Spag4) (Mus musculus (Mouse)).